Here is a 452-residue protein sequence, read N- to C-terminus: MTTGFAAKDDVFARDILSVAQLNQAVGQLMERSIPPLWVRGEVSNFTQAASGHWYFTLKDAGAAVRTVMFRGRASMVGFVPRPGDEVEIRGRVSLYEPRGDYQLQADAMRRAGVGNLFEAFSRLKDKLASEGLFDASRKRVPLRLPRAIGVVTSLQAAALRDVLSALARRAPQVEIVIYPAPVQGADAASRLAAQVRQASARREVDTLLLVRGGGSIEDLWSFNDEDLARAVADCAIPVISGVGHETDFTIADFVADLRAPTPTAAAELACVPRAELLSALGHAASRLSRAQQRRLDLAAQRLDRASAQLVSPAQRLAHQCERLNTLRHRLAASAQRPLAASAARLTGLAQRLARRAPQTARVQDRVQSLAQRLLRGQQAGLAERGVRLQALAAQLRALDPEHTLARGYAVLRDAQGRVVSNASALVVGEGVRIDLAQGRVQADITDVQPRR.

Belongs to the XseA family. As to quaternary structure, heterooligomer composed of large and small subunits.

The protein resides in the cytoplasm. The catalysed reaction is Exonucleolytic cleavage in either 5'- to 3'- or 3'- to 5'-direction to yield nucleoside 5'-phosphates.. Its function is as follows. Bidirectionally degrades single-stranded DNA into large acid-insoluble oligonucleotides, which are then degraded further into small acid-soluble oligonucleotides. This chain is Exodeoxyribonuclease 7 large subunit, found in Bordetella avium (strain 197N).